The primary structure comprises 38 residues: Phospholipase A2 2 (38 aa).

Residues Tyr28, Gly30, and Gly32 each coordinate Ca(2+).

The protein belongs to the phospholipase A2 family. Group I subfamily. It depends on Ca(2+) as a cofactor. Expressed by the venom gland.

Its subcellular location is the secreted. The enzyme catalyses a 1,2-diacyl-sn-glycero-3-phosphocholine + H2O = a 1-acyl-sn-glycero-3-phosphocholine + a fatty acid + H(+). Functionally, snake venom phospholipase A2 (PLA2) that inhibits neuromuscular transmission by blocking acetylcholine release from the nerve termini. PLA2 catalyzes the calcium-dependent hydrolysis of the 2-acyl groups in 3-sn-phosphoglycerides. This Calliophis bivirgatus (Blue Malaysian coral snake) protein is Phospholipase A2 2.